Here is a 381-residue protein sequence, read N- to C-terminus: Protein COS6 (381 aa).

Topologically, residues 1-42 are cytoplasmic; sequence MKENELKNEKSVDVLSVKQLESQKTVLPQDLFRSSFTWFCYE. The chain crosses the membrane as a helical span at residues 43-63; it reads IYKSLVFRIWMLLWLPLSVWW. The Extracellular portion of the chain corresponds to 64 to 69; that stretch reads KLSNNW. Residues 70 to 90 form a helical membrane-spanning segment; sequence IYPLMVSLLVLFWGPVFVLVI. The Cytoplasmic portion of the chain corresponds to 91-381; the sequence is FRLSRKRSLS…QLSCSEESLA (291 aa).

Belongs to the DUP/COS family.

It localises to the membrane. The protein is Protein COS6 (COS6) of Saccharomyces cerevisiae (strain ATCC 204508 / S288c) (Baker's yeast).